The primary structure comprises 209 residues: Large ribosomal subunit protein uL3 (209 aa).

An N5-methylglutamine modification is found at Gln150.

It belongs to the universal ribosomal protein uL3 family. Part of the 50S ribosomal subunit. Forms a cluster with proteins L14 and L19. Methylated by PrmB.

In terms of biological role, one of the primary rRNA binding proteins, it binds directly near the 3'-end of the 23S rRNA, where it nucleates assembly of the 50S subunit. The polypeptide is Large ribosomal subunit protein uL3 (Vibrio vulnificus (strain CMCP6)).